Here is a 664-residue protein sequence, read N- to C-terminus: Fructose-1,6-bisphosphatase class 3 (664 aa).

It belongs to the FBPase class 3 family. The cofactor is Mn(2+).

It catalyses the reaction beta-D-fructose 1,6-bisphosphate + H2O = beta-D-fructose 6-phosphate + phosphate. The protein operates within carbohydrate biosynthesis; gluconeogenesis. The polypeptide is Fructose-1,6-bisphosphatase class 3 (Bacteroides thetaiotaomicron (strain ATCC 29148 / DSM 2079 / JCM 5827 / CCUG 10774 / NCTC 10582 / VPI-5482 / E50)).